A 488-amino-acid polypeptide reads, in one-letter code: Cytochrome P450 family 716 subfamily AD polypeptide 2 (488 aa).

The chain crosses the membrane as a helical span at residues 5–25 (LLLLSTLLILTLCCHFFYLFI). Cys433 lines the heme pocket.

This sequence belongs to the cytochrome P450 family. Heme serves as cofactor. As to expression, expressed in maturing fruits and in juice vesicles.

It is found in the membrane. The catalysed reaction is (1R,2R,3S,8R,10R,11R,15S,16S)-3-(acetyloxy)-15-[(4R)-4-[(2S)-3,3-dimethyloxiran-2-yl]-1,4-dihydroxybutan-2-yl]-2,7,7,11,16-pentamethyl-5-oxo-6-oxatetracyclo[9.7.0.0(2,8).0(12,16)]octadec-12-en-10-yl acetate + reduced [NADPH--hemoprotein reductase] + O2 = (1R,2R,3S,8R,10R,11R,15S,16S)-3-(acetyloxy)-15-(1-hydroxy-4-oxobutan-2-yl)-2,7,7,11,16-pentamethyl-5-oxo-6-oxatetracyclo[9.7.0.0(2,8).0(12,16)]octadec-12-en-10-yl acetate + 2-methylpropanoate + oxidized [NADPH--hemoprotein reductase] + H2O + 2 H(+). It participates in secondary metabolite biosynthesis; terpenoid biosynthesis. Monooxygenase involved in the biosynthesis of limonoids triterpene natural products such as limonin, a compound with insecticidal activity responsible for the bitter taste in citrus. Catalyzes the formation of (1R,2R,3S,8R,10R,11R,15S,16S)-3-(acetyloxy)-15-(1-hydroxy-4-oxobutan-2-yl)-2,7,7,11,16-pentamethyl-5-oxo-6-oxatetracyclo[9.7.0.0(2,8).0(12,16)]octadec-12-en-10-yl acetate. This Citrus sinensis (Sweet orange) protein is Cytochrome P450 family 716 subfamily AD polypeptide 2.